Reading from the N-terminus, the 500-residue chain is LEM protein 2 (500 aa).

An LEM domain is found at 1–45 (MVDVEKMSDAELRAELNVRGANVGPVTGTTRSLYEKKLKKLLSGG). At 1-325 (MVDVEKMSDA…VKQTNIFNEA (325 aa)) the chain is on the nuclear side. The interval 39-202 (KKLLSGGAKT…RRITSVPGLI (164 aa)) is disordered. Over residues 46 to 57 (AKTPARPTVAKP) the composition is skewed to low complexity. Over residues 58-75 (APKPTPKSAPAPKSPKSP) the composition is skewed to pro residues. A compositionally biased stretch (low complexity) spans 77–89 (ARRSIPRAAATAA). Over residues 103 to 122 (EEMSDSDDDMRDDDDDDEEI) the composition is skewed to acidic residues. Low complexity-rich tracts occupy residues 130–141 (SSFRSANSTASS) and 168–197 (NTPR…RITS). Residues 326–346 (IYFALYVILILFVVLGIAYAL) form a helical membrane-spanning segment. Residues 347–378 (TTTHRPKTADFSGYWGVLKAAGRDSLNFFYNY) lie on the Perinuclear space side of the membrane. A helical membrane pass occupies residues 379–399 (AILPVVSLGIFVVLGAGIYFG). The Nuclear segment spans residues 400–500 (HRKYKEAKEQ…WIGNQSQKRW (101 aa)).

As to quaternary structure, interacts with lmn-1. Interacts (via LEM domain and the C-terminal nuclear domain) with baf-1. As to expression, ubiquitous. High expression in germline and intestine.

It is found in the nucleus inner membrane. The protein localises to the nucleus envelope. It localises to the chromosome. Functionally, nuclear lamina-associated inner nuclear membrane protein that is involved in cell division, nuclear structure organization, maintenance of nuclear envelope integrity and nuclear envelope reformation after mitosis. In interphase cells, plays a role in anchoring and spatial arrangement of chromosome arms at the nuclear periphery, forming so-called lem-2 subdomains. Both arms of autosomes but only the left arm of the X chromosome are anchored in lem-2 subdomains; sequences bound by lem-2 are mainly repetitive chromosome sequences and inactive genes. Involved in chromosome segregation and cell division, probably via its interaction with the nuclear intermediate filament protein lmn-1, the main component of nuclear lamina. Required to organize the distribution of lmn-1, nuclear pore complexes (NPCs) and chromatin in mitotically active cells. Involved in the nuclear positioning and efficient anchoring of microtubule-organizing centers (MTOCs) to the nuclear envelope during mitosis as well as on maintaining correct nuclear morphology. Contributes to closure of nuclear envelope (NE) holes and prevents excess nuclear membranes after meiosis and mitosis. Together with emr-1, plays a role in baf-1 enrichment at the nuclear envelope in anaphase. Together with emr-1, involved in muscle cell attachment to hypodermal cells, as well as muscle cell location and sarcomere organization. May play a role in radiation-induced DNA damage repair response. The protein is LEM protein 2 (lem-2) of Caenorhabditis elegans.